Reading from the N-terminus, the 339-residue chain is D-erythrose-4-phosphate dehydrogenase (339 aa).

12-13 (RI) contributes to the NAD(+) binding site. Substrate contacts are provided by residues 154 to 156 (SCT), R200, 213 to 214 (TK), and R236. C155 functions as the Nucleophile in the catalytic mechanism. Position 318 (N318) interacts with NAD(+).

It belongs to the glyceraldehyde-3-phosphate dehydrogenase family. Epd subfamily. Homotetramer.

It localises to the cytoplasm. It catalyses the reaction D-erythrose 4-phosphate + NAD(+) + H2O = 4-phospho-D-erythronate + NADH + 2 H(+). Its pathway is cofactor biosynthesis; pyridoxine 5'-phosphate biosynthesis; pyridoxine 5'-phosphate from D-erythrose 4-phosphate: step 1/5. Functionally, catalyzes the NAD-dependent conversion of D-erythrose 4-phosphate to 4-phosphoerythronate. This is D-erythrose-4-phosphate dehydrogenase from Proteus mirabilis (strain HI4320).